The primary structure comprises 655 residues: Acetyl-coenzyme A synthetase (655 aa).

CoA-binding positions include 196–199 and Thr-316; that span reads RGGK. Residues 392 to 394, 416 to 421, Asp-507, and Arg-522 contribute to the ATP site; these read GEP and DTWWQT. A CoA-binding site is contributed by Ser-530. Residue Arg-533 coordinates ATP. Mg(2+) is bound by residues Val-544 and Val-549. Lys-619 bears the N6-acetyllysine mark.

Belongs to the ATP-dependent AMP-binding enzyme family. The cofactor is Mg(2+). In terms of processing, acetylated. Deacetylation by the SIR2-homolog deacetylase activates the enzyme.

The enzyme catalyses acetate + ATP + CoA = acetyl-CoA + AMP + diphosphate. In terms of biological role, catalyzes the conversion of acetate into acetyl-CoA (AcCoA), an essential intermediate at the junction of anabolic and catabolic pathways. AcsA undergoes a two-step reaction. In the first half reaction, AcsA combines acetate with ATP to form acetyl-adenylate (AcAMP) intermediate. In the second half reaction, it can then transfer the acetyl group from AcAMP to the sulfhydryl group of CoA, forming the product AcCoA. The polypeptide is Acetyl-coenzyme A synthetase (Thiobacillus denitrificans (strain ATCC 25259 / T1)).